The following is a 204-amino-acid chain: Synaptosomal-associated protein 25-A (204 aa).

Basic and acidic residues predominate over residues 1 to 11 (MAEDSDMRNEL). The disordered stretch occupies residues 1–25 (MAEDSDMRNELADMQQRADQLADES). 2 t-SNARE coiled-coil homology domains span residues 19-81 (DQLA…LNDL) and 138-200 (DARE…ATKM).

The protein belongs to the SNAP-25 family. In terms of tissue distribution, expressed in several regions throughout the adult brain, including the mesencephalon.

Its subcellular location is the synapse. The protein resides in the synaptosome. It localises to the cell membrane. Its function is as follows. May play an important role in the synaptic function of specific neuronal systems. Associates with proteins involved in vesicle docking and membrane fusion. This is Synaptosomal-associated protein 25-A from Danio rerio (Zebrafish).